The following is a 249-amino-acid chain: Exosome complex component Rrp41 (249 aa).

This sequence belongs to the RNase PH family. Rrp41 subfamily. As to quaternary structure, component of the archaeal exosome complex. Forms a hexameric ring-like arrangement composed of 3 Rrp41-Rrp42 heterodimers. The hexameric ring associates with a trimer of Rrp4 and/or Csl4 subunits.

The protein localises to the cytoplasm. Catalytic component of the exosome, which is a complex involved in RNA degradation. Has 3'-&gt;5' exoribonuclease activity. Can also synthesize heteromeric RNA-tails. This Thermococcus onnurineus (strain NA1) protein is Exosome complex component Rrp41.